Here is a 457-residue protein sequence, read N- to C-terminus: Transmembrane protein 143 (457 aa).

Helical transmembrane passes span 264-284 (ILNV…GMVV) and 285-305 (LSDL…FMGL). Serine 316 is modified (phosphoserine). Over residues 429–439 (LSSPKSAPSDD) the composition is skewed to polar residues. A disordered region spans residues 429-457 (LSSPKSAPSDDNSLEKPLGPAQPSHLVGN).

The protein localises to the membrane. The polypeptide is Transmembrane protein 143 (TMEM143) (Bos taurus (Bovine)).